We begin with the raw amino-acid sequence, 396 residues long: 12-oxophytodienoate reductase 3 (396 aa).

Residues 31-33 (PMT), glycine 64, and glutamine 106 contribute to the FMN site. 185 to 188 (HGAH) lines the substrate pocket. Tyrosine 190 serves as the catalytic Proton donor. An FMN-binding site is contributed by arginine 237. Position 283 (arginine 283) interacts with substrate. FMN is bound by residues glycine 321 and 342–343 (GR). The interval 342–343 (GR) is FMN. Positions 394–396 (SRL) match the Microbody targeting signal motif.

This sequence belongs to the NADH:flavin oxidoreductase/NADH oxidase family. FMN is required as a cofactor. As to expression, expressed in roots and to a lower extent in leaves and flowers.

The protein resides in the peroxisome. The catalysed reaction is (1S,2S)-OPC-8 + NADP(+) = (9S,13S,15Z)-12-oxophyto-10,15-dienoate + NADPH + H(+). It functions in the pathway lipid metabolism; oxylipin biosynthesis. Functionally, specifically cleaves olefinic bonds in cyclic enones. Involved in the biosynthesis of jasmonic acid (JA) and perhaps in biosynthesis or metabolism of other oxylipin signaling moleclules. It is required for the spatial and temporal regulation of JA levels during dehiscence of anthers, promoting the stomium degeneration program. In vitro, reduces 9S,13S-12-oxophytodienoic acid (9S,13S-OPDA) and 9R,13R-OPDA to 9S,13S-OPC-8:0 and 9R,13R-OPC-8:0, respectively. The sequence is that of 12-oxophytodienoate reductase 3 (OPR3) from Solanum lycopersicum (Tomato).